The sequence spans 756 residues: Phosphoinositide 3-kinase regulatory subunit 6 (756 aa).

2 disordered regions span residues 570-589 and 716-738; these read SKSP…EGTG and CSRT…EKNM. Residues 717-731 show a composition bias toward polar residues; that stretch reads SRTQKSKTSALNSHG.

In terms of assembly, heterodimer of a catalytic subunit (PIK3CG) and a regulatory (PIK3R6) subunit. The binding of PIK3R6 to PIK3CG may exclude the binding of PIK3R5 to PIK3CG. Interacts with beta-gamma G protein dimers. Interacts with PDE3B and RAPGEF3; form a signaling complex that regulates phosphatidylinositol 3-kinase gamma in angiogenesis. Highly expressed in heart. In a lower extent, also expressed in brain, spleen, lung, liver, kidney, prostate, thyroid, salivary gland, dendritic cells, macrophages and neutrophils.

It localises to the cytoplasm. The protein resides in the cell membrane. In terms of biological role, regulatory subunit of the PI3K gamma complex. Acts as an adapter to drive activation of PIK3CG by beta-gamma G protein dimers. The PIK3CG:PIK3R6 heterodimer is much less sensitive to beta-gamma G proteins than PIK3CG:PIK3R5 and its membrane recruitment and beta-gamma G protein dimer-dependent activation requires HRAS bound to PIK3CG. Recruits of the PI3K gamma complex to a PDE3B:RAPGEF3 signaling complex involved in angiogenesis; signaling seems to involve RRAS. The chain is Phosphoinositide 3-kinase regulatory subunit 6 (Pik3r6) from Mus musculus (Mouse).